A 355-amino-acid polypeptide reads, in one-letter code: Peptide chain release factor 1 (355 aa).

N5-methylglutamine is present on Gln-233.

This sequence belongs to the prokaryotic/mitochondrial release factor family. Post-translationally, methylated by PrmC. Methylation increases the termination efficiency of RF1.

Its subcellular location is the cytoplasm. Functionally, peptide chain release factor 1 directs the termination of translation in response to the peptide chain termination codons UAG and UAA. This chain is Peptide chain release factor 1, found in Caldicellulosiruptor bescii (strain ATCC BAA-1888 / DSM 6725 / KCTC 15123 / Z-1320) (Anaerocellum thermophilum).